The chain runs to 522 residues: Echinocystic acid 23-monooxygenase (522 aa).

Residues Leu4–Met24 traverse the membrane as a helical; Signal-anchor for type II membrane protein segment. Asn190 carries N-linked (GlcNAc...) asparagine glycosylation. Cys470 lines the heme pocket.

It belongs to the cytochrome P450 family. Heme is required as a cofactor. Mainly expressed in flowers and flower buds, to a lesser extent in young leaves and, at low levels, in old leaves, stems and roots.

Its subcellular location is the membrane. It participates in secondary metabolite biosynthesis; terpenoid biosynthesis. Functionally, component of the oleanane-type triterpene saponins (e.g. saponarioside A and saponarioside B) biosynthetic pathway, leading to the production of natural products with detergent properties used as traditional sources of soap. An oxidoreductase that facilitates the oxidation of the methyl group to a carboxyl group at the C-23 position of echinocystic acid, resulting in the formation of quillaic acid (QA). This is Echinocystic acid 23-monooxygenase from Saponaria officinalis (Common soapwort).